The primary structure comprises 234 residues: ATP synthase subunit a 2 (234 aa).

6 consecutive transmembrane segments (helical) span residues 29-49, 90-110, 116-136, 147-167, 186-206, and 207-227; these read FFQH…VGLL, LIAT…IPGF, SLNT…IVGV, FMGP…IGHL, IVLM…MMLM, and GILV…IYIA.

Belongs to the ATPase A chain family. As to quaternary structure, F-type ATPases have 2 components, CF(1) - the catalytic core - and CF(0) - the membrane proton channel. CF(1) has five subunits: alpha(3), beta(3), gamma(1), delta(1), epsilon(1). CF(0) has three main subunits: a(1), b(2) and c(9-12). The alpha and beta chains form an alternating ring which encloses part of the gamma chain. CF(1) is attached to CF(0) by a central stalk formed by the gamma and epsilon chains, while a peripheral stalk is formed by the delta and b chains.

The protein localises to the cell inner membrane. Its function is as follows. Key component of the proton channel; it plays a direct role in the translocation of protons across the membrane. The protein is ATP synthase subunit a 2 of Syntrophotalea carbinolica (strain DSM 2380 / NBRC 103641 / GraBd1) (Pelobacter carbinolicus).